Consider the following 201-residue polypeptide: Anthranilate synthase component 2 (201 aa).

The region spanning Met-1–Glu-199 is the Glutamine amidotransferase type-1 domain. Gly-52 to Cys-54 serves as a coordination point for L-glutamine. Cys-79 acts as the Nucleophile; for GATase activity in catalysis. Residues Gln-83 and Ser-129–Leu-130 each bind L-glutamine. Active-site for GATase activity residues include His-173 and Glu-175.

In terms of assembly, heterotetramer consisting of two non-identical subunits: a beta subunit (TrpG) and a large alpha subunit (TrpE).

It catalyses the reaction chorismate + L-glutamine = anthranilate + pyruvate + L-glutamate + H(+). It participates in amino-acid biosynthesis; L-tryptophan biosynthesis; L-tryptophan from chorismate: step 1/5. Part of a heterotetrameric complex that catalyzes the two-step biosynthesis of anthranilate, an intermediate in the biosynthesis of L-tryptophan. In the first step, the glutamine-binding beta subunit (TrpG) of anthranilate synthase (AS) provides the glutamine amidotransferase activity which generates ammonia as a substrate that, along with chorismate, is used in the second step, catalyzed by the large alpha subunit of AS (TrpE) to produce anthranilate. In the absence of TrpG, TrpE can synthesize anthranilate directly from chorismate and high concentrations of ammonia. In Pseudomonas aeruginosa (strain ATCC 15692 / DSM 22644 / CIP 104116 / JCM 14847 / LMG 12228 / 1C / PRS 101 / PAO1), this protein is Anthranilate synthase component 2.